The sequence spans 1248 residues: Ankyrin repeat and sterile alpha motif domain-containing protein 1B (1248 aa).

ANK repeat units lie at residues 2–31 (GKDQ…GGIL), 58–87 (SGYT…STNV), 91–120 (KGYF…SHSR), 127–156 (ENET…DPTI), 160–189 (KLET…NLMS), 193–222 (RKHT…DVSC), and 225–254 (EKGS…DANI). The interval 296–322 (EPVQEDATQETHISSPVESPSQKTKSE) is disordered. Polar residues predominate over residues 305-322 (ETHISSPVESPSQKTKSE). Phosphoserine is present on residues serine 309, serine 310, serine 314, serine 353, and serine 364. Disordered regions lie at residues 367 to 400 (ELGK…NTCG), 474 to 514 (APSP…PDTA), and 558 to 623 (SFTA…ENPF). Polar residues predominate over residues 371–384 (NGSQSVRTSSTINL). Over residues 388–397 (EVEEEDDDEN) the composition is skewed to acidic residues. Position 503 is a phosphothreonine (threonine 503). Serine 507 and serine 510 each carry phosphoserine. A compositionally biased stretch (low complexity) spans 558-575 (SFTASPPASPPTSSVGTT). The segment covering 577-601 (VKNEGTNHTDDLSRQDDNDPPKEYD) has biased composition (basic and acidic residues). Position 738 is a phosphoserine (serine 738). Residues 749 to 777 (EKTSRVNWSESSTAEHSSKGNSERTPSFT) are disordered. The segment covering 753–763 (RVNWSESSTAE) has biased composition (polar residues). Phosphothreonine is present on threonine 773. Serine 775 carries the phosphoserine modification. 2 consecutive SAM domains span residues 810 to 876 (CPVQ…LPKM) and 884 to 949 (YHPT…RLHD). Phosphotyrosine is present on tyrosine 901. The Nuclear localization signal motif lies at 935–938 (HRKR). Residues 944–989 (GDRLHDDPPQKPPRSITLREPSGNHTPPQLSPSLSQSTYTTGGSLD) form a disordered region. Residues 969–984 (TPPQLSPSLSQSTYTT) are compositionally biased toward low complexity. A Phosphoserine modification is found at serine 974. A Phosphotyrosine modification is found at tyrosine 1007. In terms of domain architecture, PID spans 1056–1213 (IFQSCDYKAF…SFENKPSKPI (158 aa)). The disordered stretch occupies residues 1197 to 1248 (HSSTLPESFENKPSKPIPKPRVSIRKSVDLLHASHTGQEPSERHTEEALRKF). The segment covering 1236–1248 (PSERHTEEALRKF) has biased composition (basic and acidic residues).

As to quaternary structure, isoform 3 interacts with DLG4. Interacts with EPHA8. Isoform 2 interacts with COIL. Isoform 4 interacts with APP and EPHA8. Isoform 6 interacts with EPHA8. Isoform 3 nuclear translocation requires an NMDAR-dependent proteolytic cleavage. In terms of tissue distribution, highly expressed in marrow from patients with pre-B ALL associated with the t(1;19) translocation. Strongly expressed in brain and testis. Expressed in fetal brain. Isoform 4 is highly expressed in brain (at protein level). Isoform 6 is expressed in brain and several cancer cell lines.

The protein localises to the cytoplasm. The protein resides in the nucleus. It is found in the postsynaptic density. Its subcellular location is the cell projection. It localises to the dendritic spine. The protein localises to the cajal body. Functionally, isoform 2 may participate in the regulation of nucleoplasmic coilin protein interactions in neuronal and transformed cells. Isoform 3 can regulate global protein synthesis by altering nucleolar numbers. Its function is as follows. Isoform 4 may play a role as a modulator of APP processing. Overexpression can down-regulate APP processing. The protein is Ankyrin repeat and sterile alpha motif domain-containing protein 1B (ANKS1B) of Homo sapiens (Human).